The chain runs to 4731 residues: Dynein axonemal heavy chain 8 (4731 aa).

A disordered region spans residues 1–145 (MESEEGNAEP…SKFRRSMTGI (145 aa)). A compositionally biased stretch (pro residues) spans 9-55 (EPPPPSEEAPPPVVEEAPPPLPPEDTAPPPPEEQAPPPEGDAAPPPT). The segment covering 66–75 (EAPHPEDPKL) has biased composition (basic and acidic residues). Residues 94–106 (SDEEVTLPEDEES) are compositionally biased toward acidic residues. A compositionally biased stretch (polar residues) spans 122–133 (SVLSDGISQSSR). Residues 145–169 (IPNLQETLKEKQARFREARENRKMK) adopt a coiled-coil conformation. Serine 917 is modified (phosphoserine). Residues 1177-1201 (FQNNSRGSDQPPASGKPLKKEERSF) form a disordered region. A coiled-coil region spans residues 1543-1567 (DVDIEKINAELQEFQNRCRKLPRAL). AAA stretches follow at residues 2049-2271 (YQNE…VLRT), 2331-2550 (SAVD…KLSL), 2657-2910 (FYPT…IWQG), and 3021-3275 (QFNE…YRRR). Residues 2087 to 2094 (GPAGTGKT) and 2369 to 2376 (GPSGSGKT) each bind ATP. A stalk region spans residues 3290–3587 (YKSIYTDKVK…MDLLNDADMC (298 aa)). Coiled-coil stretches lie at residues 3313–3405 (DKLM…ALNT), 3531–3583 (LKAN…LLND), and 3836–3871 (RVIL…DNLL). 2 AAA regions span residues 3673–3903 (LVDP…EVSE) and 4118–4332 (ARKY…FIQN).

Belongs to the dynein heavy chain family. Consists of at least two heavy chains and a number of intermediate and light chains. As to expression, isoform 1 and/or isoform 2 are expressed in spermatocytes and mature sperm (at protein level). Testis-specific. Accumulates exclusively in mid to late spermatocytes.

It is found in the cytoplasm. It localises to the cytoskeleton. Its subcellular location is the flagellum axoneme. Its function is as follows. Force generating protein component of the outer dynein arms (ODAs) in the sperm flagellum. Produces force towards the minus ends of microtubules. Dynein has ATPase activity; the force-producing power stroke is thought to occur on release of ADP. Involved in sperm motility; implicated in sperm flagellar assembly. The chain is Dynein axonemal heavy chain 8 (Dnah8) from Mus musculus (Mouse).